Here is a 67-residue protein sequence, read N- to C-terminus: Putative ATP synthase subunit epsilon, mitochondrial (67 aa).

Belongs to the eukaryotic ATPase epsilon family. In terms of assembly, F-type ATPases have 2 components, CF(1) - the catalytic core - and CF(0) - the membrane proton channel. CF(1) has five subunits: alpha(3), beta(3), gamma(1), delta(1), epsilon(1). CF(0) seems to have nine subunits: a, b, c, d, e, f, g, F6 and 8 (or A6L).

It is found in the mitochondrion. It localises to the mitochondrion inner membrane. In terms of biological role, mitochondrial membrane ATP synthase (F(1)F(0) ATP synthase or Complex V) produces ATP from ADP in the presence of a proton gradient across the membrane which is generated by electron transport complexes of the respiratory chain. F-type ATPases consist of two structural domains, F(1) - containing the extramembraneous catalytic core, and F(0) - containing the membrane proton channel, linked together by a central stalk and a peripheral stalk. During catalysis, ATP synthesis in the catalytic domain of F(1) is coupled via a rotary mechanism of the central stalk subunits to proton translocation. Part of the complex F(1) domain and of the central stalk which is part of the complex rotary element. Rotation of the central stalk against the surrounding alpha(3)beta(3) subunits leads to hydrolysis of ATP in three separate catalytic sites on the beta subunits. The polypeptide is Putative ATP synthase subunit epsilon, mitochondrial (atp15) (Schizosaccharomyces pombe (strain 972 / ATCC 24843) (Fission yeast)).